The primary structure comprises 64 residues: Large ribosomal subunit protein bL28C (64 aa).

It belongs to the bacterial ribosomal protein bL28 family.

This Mycobacterium tuberculosis (strain ATCC 25618 / H37Rv) protein is Large ribosomal subunit protein bL28C.